Consider the following 447-residue polypeptide: MIGVLLPYVRKFQRSAESNDIADRFSYQYTSTLLGFSAIMMAASQYVGRPIQCWVPAQFTRTWEKYAETYCFIKGTYFLPGAFASEGEMSVTSPDDAVTATPQVGYYQWIPIVLVLQAFLFYLPSIIWRTFNESCELKIKELAAVSEASRKIKSNMSDDQVKATKFGRYFFKKLNFRNESPVFKETGSVVASGKFLPALYLLVKILYLANIVLQFWILTYFLETKSWMWGWQTFQDLMAGREWETTGIFPRVTMCDFSIMDLTSVHDHSIQCVIVINMLAEKVYVFFWFWLLFVGLLTVCSLAYWAVIYMLQSVGRNFIYSYLQQTPEFQTEQERGSFVPANFVDKCLTPDGVFISRLVQQNSGDLFTSIMLGEMFSLYRAREAEKAHKKDDDSALPASAPVDLQEDDDDDTPFPPPTKAVAETLTSDDEEEETDVDSPDTTATLPR.

The next 4 helical transmembrane spans lie at 30 to 47 (TSTL…SQYV), 108 to 128 (QWIP…SIIW), 198 to 218 (ALYL…FWIL), and 283 to 303 (VYVF…CSLA). The tract at residues 389–447 (KKDDDSALPASAPVDLQEDDDDDTPFPPPTKAVAETLTSDDEEEETDVDSPDTTATLPR) is disordered. The segment covering 426-438 (TSDDEEEETDVDS) has biased composition (acidic residues).

This sequence belongs to the pannexin family.

The protein localises to the cell membrane. Its subcellular location is the cell junction. It is found in the gap junction. In terms of biological role, structural component of the gap junctions. The polypeptide is Innexin-5 (inx-5) (Caenorhabditis elegans).